Reading from the N-terminus, the 256-residue chain is Trypsin, alkaline C (256 aa).

Positions 1–17 (MRLFLALLALGFAAVAA) are cleaved as a signal peptide. Positions 18 to 24 (VPANPQR) are cleaved as a propeptide — activation peptide. The region spanning 25-256 (IVGGSTTTIQ…RYTSWISNNS (232 aa)) is the Peptidase S1 domain. Cysteines 55 and 71 form a disulfide. Active-site charge relay system residues include histidine 70 and aspartate 115. 2 disulfide bridges follow: cysteine 180-cysteine 197 and cysteine 209-cysteine 233. Serine 213 acts as the Charge relay system in catalysis.

It belongs to the peptidase S1 family. As to expression, midgut.

It is found in the secreted. The protein resides in the extracellular space. The catalysed reaction is Preferential cleavage: Arg-|-Xaa, Lys-|-Xaa.. The chain is Trypsin, alkaline C from Manduca sexta (Tobacco hawkmoth).